Consider the following 207-residue polypeptide: Protein-L-isoaspartate O-methyltransferase (207 aa).

The active site involves Ser-56.

Belongs to the methyltransferase superfamily. L-isoaspartyl/D-aspartyl protein methyltransferase family.

The protein resides in the cytoplasm. It catalyses the reaction [protein]-L-isoaspartate + S-adenosyl-L-methionine = [protein]-L-isoaspartate alpha-methyl ester + S-adenosyl-L-homocysteine. Catalyzes the methyl esterification of L-isoaspartyl residues in peptides and proteins that result from spontaneous decomposition of normal L-aspartyl and L-asparaginyl residues. It plays a role in the repair and/or degradation of damaged proteins. The protein is Protein-L-isoaspartate O-methyltransferase of Pyrobaculum islandicum (strain DSM 4184 / JCM 9189 / GEO3).